The primary structure comprises 930 residues: Translation initiation factor IF-2 (930 aa).

Over residues Phe50–Val67 the composition is skewed to low complexity. Disordered stretches follow at residues Phe50–Asp195 and Glu260–Pro346. Composition is skewed to basic and acidic residues over residues Ser68–Pro90 and Phe110–Arg125. Over residues Lys129–Arg141 the composition is skewed to low complexity. 2 stretches are compositionally biased toward basic and acidic residues: residues Arg157–Lys167 and Val262–Arg295. Positions Asn309 to Asn318 are enriched in low complexity. Basic and acidic residues predominate over residues Val337–Pro346. Residues Glu432–Glu599 enclose the tr-type G domain. The G1 stretch occupies residues Gly441–Thr448. Position 441 to 448 (Gly441 to Thr448) interacts with GTP. The segment at Gly466–His470 is G2. Positions Asp487–Gly490 are G3. Residues Asp487–His491 and Asn541–Asp544 contribute to the GTP site. A G4 region spans residues Asn541–Asp544. The interval Ser577–Lys579 is G5.

It belongs to the TRAFAC class translation factor GTPase superfamily. Classic translation factor GTPase family. IF-2 subfamily.

It is found in the cytoplasm. Functionally, one of the essential components for the initiation of protein synthesis. Protects formylmethionyl-tRNA from spontaneous hydrolysis and promotes its binding to the 30S ribosomal subunits. Also involved in the hydrolysis of GTP during the formation of the 70S ribosomal complex. The polypeptide is Translation initiation factor IF-2 (Streptococcus pneumoniae (strain Hungary19A-6)).